The primary structure comprises 100 residues: Large ribosomal subunit protein uL23 (100 aa).

The protein belongs to the universal ribosomal protein uL23 family. In terms of assembly, part of the 50S ribosomal subunit. Contacts protein L29, and trigger factor when it is bound to the ribosome.

In terms of biological role, one of the early assembly proteins it binds 23S rRNA. One of the proteins that surrounds the polypeptide exit tunnel on the outside of the ribosome. Forms the main docking site for trigger factor binding to the ribosome. This Proteus mirabilis (strain HI4320) protein is Large ribosomal subunit protein uL23.